A 65-amino-acid polypeptide reads, in one-letter code: Large ribosomal subunit protein bL35 (65 aa).

This sequence belongs to the bacterial ribosomal protein bL35 family.

The chain is Large ribosomal subunit protein bL35 from Chromobacterium violaceum (strain ATCC 12472 / DSM 30191 / JCM 1249 / CCUG 213 / NBRC 12614 / NCIMB 9131 / NCTC 9757 / MK).